The following is a 674-amino-acid chain: UvrABC system protein C (674 aa).

The GIY-YIG domain maps to 16 to 95 (TNPGVYRFRD…IKEFKPRFNV (80 aa)). A UVR domain is found at 207 to 242 (KRFTNKLEKQMAAAVARLDYEQAARIRDDITALRKV).

This sequence belongs to the UvrC family. As to quaternary structure, interacts with UvrB in an incision complex.

It is found in the cytoplasm. The UvrABC repair system catalyzes the recognition and processing of DNA lesions. UvrC both incises the 5' and 3' sides of the lesion. The N-terminal half is responsible for the 3' incision and the C-terminal half is responsible for the 5' incision. This chain is UvrABC system protein C, found in Pseudarthrobacter chlorophenolicus (strain ATCC 700700 / DSM 12829 / CIP 107037 / JCM 12360 / KCTC 9906 / NCIMB 13794 / A6) (Arthrobacter chlorophenolicus).